A 448-amino-acid polypeptide reads, in one-letter code: UDP-N-acetylmuramoylalanine--D-glutamate ligase (448 aa).

ATP is bound at residue 116 to 122; the sequence is GSNAKST.

It belongs to the MurCDEF family.

Its subcellular location is the cytoplasm. The enzyme catalyses UDP-N-acetyl-alpha-D-muramoyl-L-alanine + D-glutamate + ATP = UDP-N-acetyl-alpha-D-muramoyl-L-alanyl-D-glutamate + ADP + phosphate + H(+). It participates in cell wall biogenesis; peptidoglycan biosynthesis. Functionally, cell wall formation. Catalyzes the addition of glutamate to the nucleotide precursor UDP-N-acetylmuramoyl-L-alanine (UMA). The protein is UDP-N-acetylmuramoylalanine--D-glutamate ligase of Pseudomonas syringae pv. tomato (strain ATCC BAA-871 / DC3000).